The following is a 374-amino-acid chain: MYLKTLNLRQFRNYQDQKVEFTAAKTILVGNNAQGKSNLLEAVELLATLRSHRMTRDRDLVQEGEAIAQINATLERQTGVSDLTLTLRRNGRRSVALNGESIRRQMDFLGVLNAVQFSSLDLDLVRGGPEGRRNWLDTLLIQLEPVYAHILQQYNHVLRQRNAFLKRHVETLDATSLHSELAVWDAQLATTGTRVIRRRDRAIQRLAPIASAWHASISGSTEALQIKYLPNIPSEDNHPEEVQQAFLVKIQQRAIAELHQGTTLVGPHRDEIELTINQTPARQYGSQGQQRTLVLALKLAELQLIEEVVKEPPLLLLDDVLAELDLSRQNQLLDAIQDRFQTLITTTHLGSFDSQWLKSSQILFVKAGEIIPNL.

Gly30–Ser37 contacts ATP.

The protein belongs to the RecF family.

It is found in the cytoplasm. Its function is as follows. The RecF protein is involved in DNA metabolism; it is required for DNA replication and normal SOS inducibility. RecF binds preferentially to single-stranded, linear DNA. It also seems to bind ATP. This Nostoc punctiforme (strain ATCC 29133 / PCC 73102) protein is DNA replication and repair protein RecF.